A 149-amino-acid chain; its full sequence is Calmodulin (149 aa).

Ala-2 bears the N-acetylalanine mark. EF-hand domains follow at residues Glu-8–Asn-43, Pro-44–Glu-79, Asp-81–Lys-116, and Leu-117–Lys-149. 14 residues coordinate Ca(2+): Asp-21, Asp-23, Asp-25, Thr-27, Glu-32, Asp-57, Asp-59, Asn-61, Thr-63, Glu-68, Asp-94, Asp-96, Asn-98, and Glu-105. Lys-116 is subject to N6,N6,N6-trimethyllysine. 5 residues coordinate Ca(2+): Asp-130, Asp-132, Asp-134, Gln-136, and Glu-141.

It belongs to the calmodulin family.

Functionally, calmodulin mediates the control of a large number of enzymes, ion channels and other proteins by Ca(2+). Among the enzymes to be stimulated by the calmodulin-Ca(2+) complex are a number of protein kinases and phosphatases. The sequence is that of Calmodulin from Suberites domuncula (Sponge).